Reading from the N-terminus, the 165-residue chain is Cyclic pyranopterin monophosphate synthase (165 aa).

Substrate contacts are provided by residues 83 to 85 (FCH) and 120 to 121 (ME). Asp135 is a catalytic residue.

The protein belongs to the MoaC family. Homohexamer; trimer of dimers.

The enzyme catalyses (8S)-3',8-cyclo-7,8-dihydroguanosine 5'-triphosphate = cyclic pyranopterin phosphate + diphosphate. It functions in the pathway cofactor biosynthesis; molybdopterin biosynthesis. Its function is as follows. Catalyzes the conversion of (8S)-3',8-cyclo-7,8-dihydroguanosine 5'-triphosphate to cyclic pyranopterin monophosphate (cPMP). The protein is Cyclic pyranopterin monophosphate synthase of Xanthomonas axonopodis pv. citri (strain 306).